An 89-amino-acid polypeptide reads, in one-letter code: Small ribosomal subunit protein uS15 (89 aa).

The protein belongs to the universal ribosomal protein uS15 family. As to quaternary structure, part of the 30S ribosomal subunit. Forms a bridge to the 50S subunit in the 70S ribosome, contacting the 23S rRNA.

Functionally, one of the primary rRNA binding proteins, it binds directly to 16S rRNA where it helps nucleate assembly of the platform of the 30S subunit by binding and bridging several RNA helices of the 16S rRNA. In terms of biological role, forms an intersubunit bridge (bridge B4) with the 23S rRNA of the 50S subunit in the ribosome. In Aliivibrio fischeri (strain ATCC 700601 / ES114) (Vibrio fischeri), this protein is Small ribosomal subunit protein uS15.